A 438-amino-acid chain; its full sequence is Enolase 1 (438 aa).

Histidine 160 and glutamate 169 together coordinate substrate. The Proton donor role is filled by glutamate 212. Mg(2+) is bound by residues aspartate 247, glutamate 296, and aspartate 321. 2 residues coordinate substrate: glutamate 296 and aspartate 321. Catalysis depends on lysine 346, which acts as the Proton acceptor. Substrate contacts are provided by residues 373–376 (SHRS) and lysine 397.

This sequence belongs to the enolase family. In terms of assembly, homodimer. It depends on Mg(2+) as a cofactor.

The protein localises to the cytoplasm. It catalyses the reaction (2R)-2-phosphoglycerate = phosphoenolpyruvate + H2O. It functions in the pathway carbohydrate degradation; glycolysis; pyruvate from D-glyceraldehyde 3-phosphate: step 4/5. The chain is Enolase 1 (ENO1) from Candida glabrata (strain ATCC 2001 / BCRC 20586 / JCM 3761 / NBRC 0622 / NRRL Y-65 / CBS 138) (Yeast).